A 362-amino-acid polypeptide reads, in one-letter code: Ribosome-binding ATPase YchF (362 aa).

An OBG-type G domain is found at 3–255; it reads FKCGIIGLPN…MNEDEQKYFM (253 aa). 12 to 17 contacts ATP; sequence NVGKST. Mg(2+) contacts are provided by serine 16 and threonine 36. Residues 277-360 enclose the TGS domain; the sequence is NLITFFTAGI…QDGDIINFLF (84 aa).

This sequence belongs to the TRAFAC class OBG-HflX-like GTPase superfamily. OBG GTPase family. YchF/OLA1 subfamily. Mg(2+) serves as cofactor.

Functionally, ATPase that binds to both the 70S ribosome and the 50S ribosomal subunit in a nucleotide-independent manner. The chain is Ribosome-binding ATPase YchF from Buchnera aphidicola subsp. Schizaphis graminum (strain Sg).